The following is a 193-amino-acid chain: ATP-dependent Clp protease proteolytic subunit 1 (193 aa).

S98 (nucleophile) is an active-site residue. Residue H123 is part of the active site.

This sequence belongs to the peptidase S14 family. Fourteen ClpP subunits assemble into 2 heptameric rings which stack back to back to give a disk-like structure with a central cavity, resembling the structure of eukaryotic proteasomes.

It is found in the cytoplasm. The catalysed reaction is Hydrolysis of proteins to small peptides in the presence of ATP and magnesium. alpha-casein is the usual test substrate. In the absence of ATP, only oligopeptides shorter than five residues are hydrolyzed (such as succinyl-Leu-Tyr-|-NHMec, and Leu-Tyr-Leu-|-Tyr-Trp, in which cleavage of the -Tyr-|-Leu- and -Tyr-|-Trp bonds also occurs).. Functionally, cleaves peptides in various proteins in a process that requires ATP hydrolysis. Has a chymotrypsin-like activity. Plays a major role in the degradation of misfolded proteins. The chain is ATP-dependent Clp protease proteolytic subunit 1 from Bacillus anthracis.